The following is a 1342-amino-acid chain: DNA-directed RNA polymerase subunit beta (1342 aa).

N6-acetyllysine is present on residues Lys1022 and Lys1200.

Belongs to the RNA polymerase beta chain family. As to quaternary structure, the RNAP catalytic core consists of 2 alpha, 1 beta, 1 beta' and 1 omega subunit. When a sigma factor is associated with the core the holoenzyme is formed, which can initiate transcription.

The enzyme catalyses RNA(n) + a ribonucleoside 5'-triphosphate = RNA(n+1) + diphosphate. Its function is as follows. DNA-dependent RNA polymerase catalyzes the transcription of DNA into RNA using the four ribonucleoside triphosphates as substrates. The polypeptide is DNA-directed RNA polymerase subunit beta (Escherichia coli O139:H28 (strain E24377A / ETEC)).